The sequence spans 337 residues: Monoacylglycerol lipase ABHD6 (337 aa).

At 1 to 8 the chain is on the extracellular side; the sequence is MDLDVVNM. A helical; Signal-anchor for type II membrane protein transmembrane segment spans residues 9–29; that stretch reads FVIAGGTLAIPILAFVASFLL. The Cytoplasmic segment spans residues 30–337; sequence WPSALIRIYY…HNTDNNKKLD (308 aa). In terms of domain architecture, AB hydrolase-1 spans 72-313; that stretch reads PSILMLHGFS…CGHSVVMERP (242 aa). F80 provides a ligand contact to (9Z)-octadecenoate. S148 (nucleophile) is an active-site residue. (9Z)-octadecenoate is bound at residue M149. Residues D278 and H306 each act as charge relay system in the active site. H306 contacts (9Z)-octadecenoate.

The protein belongs to the AB hydrolase superfamily.

The protein resides in the late endosome membrane. It is found in the lysosome membrane. It localises to the mitochondrion membrane. It carries out the reaction Hydrolyzes glycerol monoesters of long-chain fatty acids.. The catalysed reaction is 1-octanoylglycerol + H2O = octanoate + glycerol + H(+). The enzyme catalyses 1-decanoylglycerol + H2O = decanoate + glycerol + H(+). It catalyses the reaction 1-dodecanoylglycerol + H2O = dodecanoate + glycerol + H(+). It carries out the reaction 1-tetradecanoylglycerol + H2O = tetradecanoate + glycerol + H(+). The catalysed reaction is 2-hexadecanoylglycerol + H2O = glycerol + hexadecanoate + H(+). The enzyme catalyses 2-(9Z-octadecenoyl)-glycerol + H2O = glycerol + (9Z)-octadecenoate + H(+). It catalyses the reaction 1-(9Z-octadecenoyl)-glycerol + H2O = glycerol + (9Z)-octadecenoate + H(+). It carries out the reaction 2-(9Z,12Z-octadecadienoyl)-glycerol + H2O = (9Z,12Z)-octadecadienoate + glycerol + H(+). The catalysed reaction is 2-(5Z,8Z,11Z,14Z-eicosatetraenoyl)-glycerol + H2O = glycerol + (5Z,8Z,11Z,14Z)-eicosatetraenoate + H(+). The enzyme catalyses 1-(5Z,8Z,11Z,14Z-eicosatetraenoyl)-glycerol + H2O = glycerol + (5Z,8Z,11Z,14Z)-eicosatetraenoate + H(+). It catalyses the reaction 1-(9Z,12Z-octadecadienoyl)-glycerol + H2O = (9Z,12Z)-octadecadienoate + glycerol + H(+). It carries out the reaction 3-(9Z-octadecenoyl)-sn-glycero-1-phospho-(3'-(9Z-octadecenoyl)-1'-sn-glycerol) + H2O = 3-(9Z-octadecenoyl)-sn-glycero-1-phospho-(1'-sn-glycerol) + (9Z)-octadecenoate + H(+). The catalysed reaction is (S,S)-2-(9Z-octadecenoyl)-sn-glycero-1-phospho-(2'-(9Z-octadecenoyl)-1'-sn-glycerol) + H2O = (S,S)-2-(9Z-octadecenoyl)-sn-glycero-1-phospho-(1'-sn-glycerol) + (9Z)-octadecenoate + H(+). The enzyme catalyses (R,R)-2-(9Z-octadecenoyl)-sn-glycero-3-phospho-(2'-(9Z-octadecenoyl)-3'-sn-glycerol) + H2O = (R,R)-2-(9Z-octadecenoyl)-sn-glycero-3-phospho-(3'-sn-glycerol) + (9Z)-octadecenoate + H(+). Lipase that preferentially hydrolysis medium-chain saturated monoacylglycerols including 2-arachidonoylglycerol. Through 2-arachidonoylglycerol degradation may regulate endocannabinoid signaling pathways. Also has a lysophosphatidyl lipase activity with a preference for lysophosphatidylglycerol among other lysophospholipids. Also able to degrade bis(monoacylglycero)phosphate (BMP) and constitutes the major enzyme for BMP catabolism. BMP, also known as lysobisphosphatidic acid, is enriched in late endosomes and lysosomes and plays a key role in the formation of intraluminal vesicles and in lipid sorting. The chain is Monoacylglycerol lipase ABHD6 from Homo sapiens (Human).